A 286-amino-acid polypeptide reads, in one-letter code: 3-hydroxyanthranilate 3,4-dioxygenase (286 aa).

Residues 1 to 160 (MERPVRVKAW…SEQYRTGKPN (160 aa)) form a domain A (catalytic) region. R43 serves as a coordination point for O2. Fe cation contacts are provided by H47, E53, and H91. E53 contributes to the substrate binding site. Substrate is bound by residues R95 and E105. The segment at 161-177 (PDQLLKEPPFPLSTRSV) is linker. Positions 178-286 (MEPMCLEAWL…QDPACKKSLG (109 aa)) are domain B.

The protein belongs to the 3-HAO family. Monomer. Fe(2+) serves as cofactor.

It localises to the cytoplasm. The protein resides in the cytosol. It catalyses the reaction 3-hydroxyanthranilate + O2 = (2Z,4Z)-2-amino-3-carboxymuconate 6-semialdehyde. It functions in the pathway cofactor biosynthesis; NAD(+) biosynthesis; quinolinate from L-kynurenine: step 3/3. In terms of biological role, catalyzes the oxidative ring opening of 3-hydroxyanthranilate to 2-amino-3-carboxymuconate semialdehyde, which spontaneously cyclizes to quinolinate. The polypeptide is 3-hydroxyanthranilate 3,4-dioxygenase (Bos taurus (Bovine)).